Here is a 698-residue protein sequence, read N- to C-terminus: Ion-translocating oxidoreductase complex subunit C (698 aa).

4Fe-4S ferredoxin-type domains are found at residues 366–397 and 407–436; these read TEMG…QQLY and KARN…VQYY. [4Fe-4S] cluster contacts are provided by Cys-377, Cys-380, Cys-383, Cys-387, Cys-416, Cys-419, Cys-422, and Cys-426.

Belongs to the 4Fe4S bacterial-type ferredoxin family. RnfC subfamily. In terms of assembly, the complex is composed of six subunits: RnfA, RnfB, RnfC, RnfD, RnfE and RnfG. The cofactor is [4Fe-4S] cluster.

It is found in the cell inner membrane. In terms of biological role, part of a membrane-bound complex that couples electron transfer with translocation of ions across the membrane. This chain is Ion-translocating oxidoreductase complex subunit C, found in Yersinia pseudotuberculosis serotype O:3 (strain YPIII).